We begin with the raw amino-acid sequence, 987 residues long: SNF2 domain-containing protein ENL1 (987 aa).

Disordered regions lie at residues 1-172 and 224-245; these read MASP…AYGG and FGDY…ENHA. Pro residues-rich tracts occupy residues 18–27 and 51–71; these read TPPAPTPLAA and NPNP…PQEP. Basic and acidic residues predominate over residues 99-110; the sequence is DSIRDILDDLTT. Positions 141-156 are enriched in polar residues; that stretch reads PSQSQLNDGTKPSSSF. Acidic residues predominate over residues 226-237; that stretch reads DYDDEDDIDQDA. A Helicase ATP-binding domain is found at 292–466; it reads WVLHCRGTGG…WALFYFCCPE (175 aa). 305-312 contributes to the ATP binding site; the sequence is DDMGLGKT. The DEAH box motif lies at 417–420; it reads DEGH. Positions 645-801 constitute a Helicase C-terminal domain; the sequence is SLLQNLVSEG…TRYFSKRDIQ (157 aa).

The protein belongs to the SNF2/RAD54 helicase family. Expressed in ovaries, roots, shoots and leaves.

Its subcellular location is the cytoplasm. It localises to the chromosome. Functionally, DNA helicase that acts as an essential component of the spindle assembly checkpoint. Plays an indispensable role in the development of seed endosperm. Is required to secure sister chromosome separation during endosperm syncytial mitosis, which involves extremely rapid free nuclear cycles. The chain is SNF2 domain-containing protein ENL1 from Oryza sativa subsp. japonica (Rice).